Reading from the N-terminus, the 302-residue chain is Large ribosomal subunit protein uL29m (302 aa).

This sequence belongs to the universal ribosomal protein uL29 family. Component of the mitochondrial large ribosomal subunit. Mature mitochondrial ribosomes consist of a small (37S) and a large (54S) subunit. The 37S subunit contains at least 33 different proteins and 1 molecule of RNA (15S). The 54S subunit contains at least 45 different proteins and 1 molecule of RNA (21S).

It localises to the mitochondrion. In Debaryomyces hansenii (strain ATCC 36239 / CBS 767 / BCRC 21394 / JCM 1990 / NBRC 0083 / IGC 2968) (Yeast), this protein is Large ribosomal subunit protein uL29m (MRPL4).